An 88-amino-acid polypeptide reads, in one-letter code: Large ribosomal subunit protein eL20 (88 aa).

The protein belongs to the eukaryotic ribosomal protein eL20 family. In terms of assembly, part of the 50S ribosomal subunit. Binds 23S rRNA.

The protein is Large ribosomal subunit protein eL20 of Aeropyrum pernix (strain ATCC 700893 / DSM 11879 / JCM 9820 / NBRC 100138 / K1).